The chain runs to 35 residues: Cecropin-B (35 aa).

Leu35 bears the Leucine amide mark.

Belongs to the cecropin family.

Its subcellular location is the secreted. Its function is as follows. Cecropins have lytic and antibacterial activity against several Gram-positive and Gram-negative bacteria. This Antheraea pernyi (Chinese oak silk moth) protein is Cecropin-B.